A 279-amino-acid chain; its full sequence is NADPH-dependent 7-cyano-7-deazaguanine reductase (279 aa).

86-88 (IES) lines the substrate pocket. 88-89 (SK) serves as a coordination point for NADPH. Catalysis depends on C187, which acts as the Thioimide intermediate. The active-site Proton donor is the D194. 226–227 (HE) contributes to the substrate binding site. 255–256 (RG) provides a ligand contact to NADPH.

The protein belongs to the GTP cyclohydrolase I family. QueF type 2 subfamily. In terms of assembly, homodimer.

Its subcellular location is the cytoplasm. The enzyme catalyses 7-aminomethyl-7-carbaguanine + 2 NADP(+) = 7-cyano-7-deazaguanine + 2 NADPH + 3 H(+). It participates in tRNA modification; tRNA-queuosine biosynthesis. Its function is as follows. Catalyzes the NADPH-dependent reduction of 7-cyano-7-deazaguanine (preQ0) to 7-aminomethyl-7-deazaguanine (preQ1). The sequence is that of NADPH-dependent 7-cyano-7-deazaguanine reductase from Histophilus somni (strain 129Pt) (Haemophilus somnus).